Here is a 185-residue protein sequence, read N- to C-terminus: uncharacterized protein (185 aa).

This is an uncharacterized protein from Magallana gigas (Pacific oyster).